A 245-amino-acid chain; its full sequence is Ubiquinone/menaquinone biosynthesis C-methyltransferase UbiE (245 aa).

Residues Thr71, Asp92, and Asp118–Ala119 contribute to the S-adenosyl-L-methionine site.

The protein belongs to the class I-like SAM-binding methyltransferase superfamily. MenG/UbiE family.

It carries out the reaction a 2-demethylmenaquinol + S-adenosyl-L-methionine = a menaquinol + S-adenosyl-L-homocysteine + H(+). The catalysed reaction is a 2-methoxy-6-(all-trans-polyprenyl)benzene-1,4-diol + S-adenosyl-L-methionine = a 5-methoxy-2-methyl-3-(all-trans-polyprenyl)benzene-1,4-diol + S-adenosyl-L-homocysteine + H(+). The protein operates within quinol/quinone metabolism; menaquinone biosynthesis; menaquinol from 1,4-dihydroxy-2-naphthoate: step 2/2. It participates in cofactor biosynthesis; ubiquinone biosynthesis. Functionally, methyltransferase required for the conversion of demethylmenaquinol (DMKH2) to menaquinol (MKH2) and the conversion of 2-polyprenyl-6-methoxy-1,4-benzoquinol (DDMQH2) to 2-polyprenyl-3-methyl-6-methoxy-1,4-benzoquinol (DMQH2). The chain is Ubiquinone/menaquinone biosynthesis C-methyltransferase UbiE from Neisseria gonorrhoeae (strain ATCC 700825 / FA 1090).